Reading from the N-terminus, the 634-residue chain is GTP-binding protein 4 (634 aa).

At alanine 2 the chain carries N-acetylalanine. Lysine 103 is subject to N6-acetyllysine; alternate. A Glycyl lysine isopeptide (Lys-Gly) (interchain with G-Cter in SUMO2); alternate cross-link involves residue lysine 103. At serine 122 the chain carries Phosphoserine. The region spanning 169-340 is the OBG-type G domain; the sequence is RTLLLCGYPN…VKTEACDRLL (172 aa). GTP-binding positions include 175–182, 221–225, and 289–292; these read GYPNVGKS, DTPGI, and NKCD. Lysine 332 is covalently cross-linked (Glycyl lysine isopeptide (Lys-Gly) (interchain with G-Cter in SUMO2)). Residues serine 468, serine 470, and serine 472 each carry the phosphoserine modification. The interval 495–517 is disordered; that stretch reads ILESKEKNTQGPRMPRTAKKVQR. Position 522 is an N6-acetyllysine (lysine 522). The segment at 529 to 634 is disordered; it reads VDMDDKDDAH…KRKAGKKDRR (106 aa). Lysine 534 participates in a covalent cross-link: Glycyl lysine isopeptide (Lys-Gly) (interchain with G-Cter in SUMO2). A compositionally biased stretch (basic residues) spans 544-554; that stretch reads RRSRSITRKRK. Serine 558 is subject to Phosphoserine. Residues 560–572 are compositionally biased toward polar residues; it reads PPSSVARSGSCSR. Basic and acidic residues predominate over residues 573 to 585; the sequence is TPRDVSGLRDVKM. Over residues 586-604 the composition is skewed to basic residues; sequence VKKAKTMMKNAQKKMNRLG. Residues 605–618 show a composition bias toward basic and acidic residues; that stretch reads KKGEADRHVFDMKP. A compositionally biased stretch (basic residues) spans 619–634; it reads KHLLSGKRKAGKKDRR.

This sequence belongs to the TRAFAC class OBG-HflX-like GTPase superfamily. OBG GTPase family. NOG subfamily. In terms of assembly, associates with pre-60S ribosomal particles. Interacts with MINAS-60 (product of an alternative open reading frame of RBM10).

It is found in the nucleus. It localises to the nucleolus. Involved in the biogenesis of the 60S ribosomal subunit. Acts as a TP53 repressor, preventing TP53 stabilization and cell cycle arrest. The protein is GTP-binding protein 4 of Homo sapiens (Human).